A 150-amino-acid chain; its full sequence is Large ribosomal subunit protein bL9 (150 aa).

The protein belongs to the bacterial ribosomal protein bL9 family.

In terms of biological role, binds to the 23S rRNA. This chain is Large ribosomal subunit protein bL9, found in Enterococcus faecalis (strain ATCC 700802 / V583).